Consider the following 149-residue polypeptide: Protein NrdI (149 aa).

The protein belongs to the NrdI family.

Functionally, probably involved in ribonucleotide reductase function. The sequence is that of Protein NrdI from Malacoplasma penetrans (strain HF-2) (Mycoplasma penetrans).